The chain runs to 299 residues: Non-homologous end joining protein Ku (299 aa).

The Ku domain occupies 10–188 (ISFGLVHIPV…TEAVTDARLT (179 aa)). Disordered regions lie at residues 227–249 (AGEGKIEDVETDPGEEERKSADV) and 261–299 (AGKSSASKTRKPAAKDKVADKQSPKPKRPAVRKKTGKAS). Residues 273–283 (AAKDKVADKQS) show a composition bias toward basic and acidic residues. The segment covering 284–299 (PKPKRPAVRKKTGKAS) has biased composition (basic residues).

Belongs to the prokaryotic Ku family. Homodimer. Interacts with LigD.

In terms of biological role, with LigD forms a non-homologous end joining (NHEJ) DNA repair enzyme, which repairs dsDNA breaks with reduced fidelity. Binds linear dsDNA with 5'- and 3'- overhangs but not closed circular dsDNA nor ssDNA. Recruits and stimulates the ligase activity of LigD. The chain is Non-homologous end joining protein Ku from Pseudomonas syringae pv. tomato (strain ATCC BAA-871 / DC3000).